The chain runs to 443 residues: F-box only protein 39 (443 aa).

An F-box domain is found at 13–59 (QSCWATLPDVCLRRVFWWLGDRDRSRAALVCRKWNQIMYSADLWRYR).

As to quaternary structure, directly interacts with SKP1 and CUL1.

Functionally, substrate-recognition component of the SCF (SKP1-CUL1-F-box protein)-type E3 ubiquitin ligase complex. The polypeptide is F-box only protein 39 (Fbxo39) (Mus musculus (Mouse)).